The sequence spans 319 residues: HTH-type transcriptional regulator YidZ (319 aa).

An HTH lysR-type domain is found at 8-65; that stretch reads LDLNLLLCLQLLMQERSVTKAAKRINVTPSAVSKSLAKLRAWFDDPLFVNSPLGLSPT. Positions 25–44 form a DNA-binding region, H-T-H motif; that stretch reads VTKAAKRINVTPSAVSKSLA.

The protein belongs to the LysR transcriptional regulatory family.

Involved in anaerobic NO protection. In Escherichia coli (strain K12 / MC4100 / BW2952), this protein is HTH-type transcriptional regulator YidZ.